Here is a 336-residue protein sequence, read N- to C-terminus: Aspartate--ammonia ligase (336 aa).

It belongs to the class-II aminoacyl-tRNA synthetase family. AsnA subfamily.

It is found in the cytoplasm. The enzyme catalyses L-aspartate + NH4(+) + ATP = L-asparagine + AMP + diphosphate + H(+). It participates in amino-acid biosynthesis; L-asparagine biosynthesis; L-asparagine from L-aspartate (ammonia route): step 1/1. The sequence is that of Aspartate--ammonia ligase from Limosilactobacillus fermentum (strain NBRC 3956 / LMG 18251) (Lactobacillus fermentum).